Consider the following 1463-residue polypeptide: Secretory phospholipase A2 receptor (1463 aa).

A signal peptide spans 1 to 20 (MLLSPSLLLLLLLGAPRGCA). Over 21–1397 (EGVAAALTPE…ALPEKGPSHS (1377 aa)) the chain is Extracellular. A Ricin B-type lectin domain is found at 38–161 (KGIFVIQSES…GSGGGDICEY (124 aa)). 14 disulfide bridges follow: Cys-51–Cys-64, Cys-89–Cys-106, Cys-178–Cys-204, Cys-192–Cys-219, Cys-260–Cys-354, Cys-330–Cys-346, Cys-406–Cys-501, Cys-478–Cys-493, Cys-617–Cys-634, Cys-699–Cys-796, Cys-774–Cys-788, Cys-840–Cys-937, Cys-914–Cys-929, and Cys-1067–Cys-1087. Residue Asn-93 is glycosylated (N-linked (GlcNAc...) asparagine). Residues 173–221 (THGMPCMFPFQYNHQWHHECTREGREDDLLWCATTSRYERDEKWGFCPD) form the Fibronectin type-II domain. C-type lectin domains are found at residues 238 to 355 (NSHI…YICK), 385 to 502 (YNRN…YICK), 522 to 643 (HGGF…MSLC), 673 to 797 (GLAS…WICK), 819 to 938 (YQDA…SICK), 965 to 1096 (FNYK…GFVC), 1121 to 1232 (YGNR…GAIC), and 1257 to 1378 (FKSN…FICK). N-linked (GlcNAc...) asparagine glycosylation is present at Asn-454. N-linked (GlcNAc...) asparagine glycosylation occurs at Asn-1123. Disulfide bonds link Cys-1209-Cys-1223, Cys-1280-Cys-1377, and Cys-1354-Cys-1369. The helical transmembrane segment at 1398–1418 (IIPLAVVLTLIVIVAICTLSF) threads the bilayer. The Cytoplasmic portion of the chain corresponds to 1419–1463 (CIYKHNGGFFRRLAGFRNPYYPATNFSTVYLEENILISDLEKSDQ). The short motif at 1436 to 1442 (NPYYPAT) is the Endocytosis signal element.

In terms of assembly, interacts with sPLA2-IB/PLA2G1B; this interaction mediates intracellular signaling as well as clearance of extracellular sPLA2-IB/PLA2G1B via endocytotic pathway. Interacts with sPLA2-X/PLA2G10; this interaction mediates sPLA2-X/PLA2G10 clearance and inactivation. In terms of processing, the secretory phospholipase A2 receptor form may be produced by the action of metalloproteinases. It contains all extracellular domains and only lacks transmembrane and cytosolic regions. It is however unclear whether this form is produced by proteolytic cleavage as suggested by some experiments, or by alternative splicing, as in the case of isoform 2 that shares all characteristics of secretory phospholipase A2 receptor form. Expressed in podocytes (at protein level). Present in lung macrophage (at protein level). Highly expressed in kidney. Also expressed in pancreas, amnion, choriodecidua and placenta. Isoform 2 is expressed at much lower level.

The protein resides in the cell membrane. The protein localises to the secreted. In terms of biological role, receptor for secretory phospholipase A2 (sPLA2). Acts as a receptor for phospholipase sPLA2-IB/PLA2G1B but not sPLA2-IIA/PLA2G2A. Also able to bind to snake PA2-like toxins. Although its precise function remains unclear, binding of sPLA2 to its receptor participates in both positive and negative regulation of sPLA2 functions as well as clearance of sPLA2. Binding of sPLA2-IB/PLA2G1B induces various effects depending on the cell type, such as activation of the mitogen-activated protein kinase (MAPK) cascade to induce cell proliferation, the production of lipid mediators, selective release of arachidonic acid in bone marrow-derived mast cells. In neutrophils, binding of sPLA2-IB/PLA2G1B can activate p38 MAPK to stimulate elastase release and cell adhesion. May be involved in responses in pro-inflammatory cytokine productions during endotoxic shock. Also has endocytic properties and rapidly internalizes sPLA2 ligands, which is particularly important for the clearance of extracellular sPLA2s to protect their potent enzymatic activities. The soluble secretory phospholipase A2 receptor form is circulating and acts as a negative regulator of sPLA2 functions by blocking the biological functions of sPLA2-IB/PLA2G1B. In podocytes, binding of sPLA2-IB/PLA2G1B can regulate podocyte survival and glomerular homeostasis. This Homo sapiens (Human) protein is Secretory phospholipase A2 receptor (PLA2R1).